We begin with the raw amino-acid sequence, 151 residues long: Large ribosomal subunit protein uL15 (151 aa).

Residues 1-60 form a disordered region; it reads MAENSPLKAHNLRPAPGAKTAKTRVGRGEASKGKTAGRGTKGTKARYQVPERFEGGQMPL.

It belongs to the universal ribosomal protein uL15 family. Part of the 50S ribosomal subunit.

Its function is as follows. Binds to the 23S rRNA. In Streptomyces griseus subsp. griseus (strain JCM 4626 / CBS 651.72 / NBRC 13350 / KCC S-0626 / ISP 5235), this protein is Large ribosomal subunit protein uL15.